The chain runs to 239 residues: Norbelladine 4'-O-methyltransferase 4 (239 aa).

S-adenosyl-L-methionine-binding positions include valine 55, glutamate 77, 79 to 80 (GV), serine 85, aspartate 103, and alanine 132. Aspartate 155 is a binding site for a divalent metal cation. Aspartate 157 is an S-adenosyl-L-methionine binding site. Residues aspartate 181 and asparagine 182 each coordinate a divalent metal cation.

The protein belongs to the class I-like SAM-binding methyltransferase superfamily. Cation-dependent O-methyltransferase family. Requires Mg(2+) as cofactor.

It catalyses the reaction norbelladine + S-adenosyl-L-methionine = 4'-O-methylnorbelladine + S-adenosyl-L-homocysteine + H(+). It functions in the pathway alkaloid biosynthesis. 4'-O-methyltransferase converting norbelladine to 4'-O-methylnorbelladine. 4'-O-methylnorbelladine is a precursor to all Amaryllidaceae alkaloids such as galanthamine, lycorine and haemanthamine, and including haemanthamine- and crinamine-type alkaloids, promising anticancer agents. The protein is Norbelladine 4'-O-methyltransferase 4 of Narcissus aff. pseudonarcissus MK-2014 (Daffodil).